We begin with the raw amino-acid sequence, 414 residues long: CinA-like protein (414 aa).

This sequence belongs to the CinA family.

The polypeptide is CinA-like protein (Koribacter versatilis (strain Ellin345)).